Consider the following 109-residue polypeptide: Glutaredoxin 4 (109 aa).

Residues 4 to 106 (LDKIKKQISE…TLLADVAAKY (103 aa)) enclose the Glutaredoxin domain. Lys21 is a binding site for glutathione. Residue Cys29 participates in [2Fe-2S] cluster binding. Glutathione contacts are provided by residues Arg58, Phe70, and 83–84 (CD).

The protein belongs to the glutaredoxin family. Monothiol subfamily. As to quaternary structure, homodimer.

It localises to the cytoplasm. Its function is as follows. Monothiol glutaredoxin involved in the biogenesis of iron-sulfur clusters. In Pasteurella multocida (strain Pm70), this protein is Glutaredoxin 4 (grxD).